The sequence spans 122 residues: Urease subunit beta (122 aa).

The protein belongs to the urease beta subunit family. As to quaternary structure, heterotrimer of UreA (gamma), UreB (beta) and UreC (alpha) subunits. Three heterotrimers associate to form the active enzyme.

Its subcellular location is the cytoplasm. It catalyses the reaction urea + 2 H2O + H(+) = hydrogencarbonate + 2 NH4(+). The protein operates within nitrogen metabolism; urea degradation; CO(2) and NH(3) from urea (urease route): step 1/1. This chain is Urease subunit beta, found in Lysinibacillus sphaericus (strain C3-41).